A 433-amino-acid chain; its full sequence is Oxidoreductase acuF (433 aa).

It participates in secondary metabolite biosynthesis. Functionally, oxidoreductase; part of the gene cluster that mediates the biosynthesis of aculins. The pathway begins with the synthesis of 6-methylsalicylic acid by the polyketide synthase (PKS) acuA via condensation of acetate and malonate units. The 6-methylsalicylic acid decarboxylase acuB then catalyzes the decarboxylation of 6-methylsalicylic acid to yield m-cresol (also known as 3-methylphenol). These first reactions occur in the cytosol. The intermediate m-cresol is then transported into the endoplasmic reticulum where the cytochrome P450 monooxygenase acuC converts it to m-hydroxybenzyl alcohol, which is further converted to gentisyl alcohol by the cytochrome P450 monooxygenase acuD. Gentisyl alcohol is further oxidized by the oxidoreductase acuE that probably catalyzes hydroxylation of the aromatic ring. The aromatic system might then be opened by oxidation through a Baeyer-Villiger type of oxidation, which could be catalyzed by acuF, with the carboxylic acid at C-1 subsequently reduced to an aldehyde by acuG. Subsequently, a hemiacetal is formed, before the dehydrogenase acuH would reduce the double bond between C-4 and C-6. Finally, keto-enol tautomerism results in formation of aculinic acid, which exists as two diastereomers (both R/S configurations at C-1) by non-enzymatic hemiacetal formation. The carboxypeptidase acuI could be involved in the linking of aculinic acid to an aculene A moiety produced by the aculene biosynthesis cluster and which leads to the production of aculin A. AcuI may also be involved in the attachment of proline to aculinic acid to form epi-aculins A and B. In Aspergillus aculeatus (strain ATCC 16872 / CBS 172.66 / WB 5094), this protein is Oxidoreductase acuF.